Here is a 65-residue protein sequence, read N- to C-terminus: LKDGYIVDDRNCTYFCGTNAYCNEECVKLKGESGYCQWVGRYGNACWCYKLPDHVRTVQAGRCRS.

The LCN-type CS-alpha/beta domain maps to 2–64; that stretch reads KDGYIVDDRN…VRTVQAGRCR (63 aa). 4 cysteine pairs are disulfide-bonded: C12/C63, C16/C36, C22/C46, and C26/C48.

This sequence belongs to the long (4 C-C) scorpion toxin superfamily. Sodium channel inhibitor family. Alpha subfamily. In terms of tissue distribution, expressed by the venom gland.

It localises to the secreted. Its function is as follows. Alpha toxins bind voltage-independently at site-3 of sodium channels (Nav) and inhibit the inactivation of the activated channels, thereby blocking neuronal transmission. This chain is Alpha-toxin Bot11, found in Buthus occitanus tunetanus (Common European scorpion).